Consider the following 840-residue polypeptide: Axin-2 (840 aa).

The segment at M1–L75 is disordered. Residues A21–E30 carry the Tankyrase-binding motif motif. Over residues K42–A55 the composition is skewed to polar residues. A compositionally biased stretch (basic and acidic residues) spans R56 to A69. An RGS domain is found at S81 to V200. Disordered stretches follow at residues S300–T363, I398–P435, L447–T485, R572–S614, and A715–K745. Positions S303 to S318 are enriched in low complexity. Residues M327–S413 are interaction with GSK3B. An interaction with beta-catenin region spans residues S413–Q478. The span at D468–Q478 shows a compositional bias: basic residues. One can recognise a DIX domain in the interval A758 to D840.

As to quaternary structure, interacts with glycogen synthase kinase-3 beta (GSK3B) and beta-catenin. The interaction between axin and beta-catenin occurs via the armadillo repeats contained in beta-catenin. Interacts with SMAD7 and RNF111. Interacts with ANKRD6. Interacts with SIAH1. Interacts with SIAH2. In terms of processing, ADP-ribosylated by tankyrase TNKS and TNKS2. Poly-ADP-ribosylated protein is recognized by RNF146, followed by ubiquitination and subsequent activation of the Wnt signaling pathway. Ubiquitinated by RNF146 when poly-ADP-ribosylated, leading to its degradation and subsequent activation of the Wnt signaling pathway. Deubiquitinated by USP34, deubiquitinated downstream of beta-catenin stabilization step: deubiquitination is important Wnt signaling to positively regulate beta-catenin (CTNBB1)-mediated transcription. Post-translationally, probably phosphorylated by GSK3B and dephosphorylated by PP2A. In terms of tissue distribution, expressed in Tcf7-positive innate-like T-cells (at protein level).

Its subcellular location is the cytoplasm. Functionally, inhibitor of the Wnt signaling pathway. Down-regulates beta-catenin. Probably facilitate the phosphorylation of beta-catenin and APC by GSK3B. In Mus musculus (Mouse), this protein is Axin-2.